A 247-amino-acid polypeptide reads, in one-letter code: ATP synthase subunit a, chloroplastic (247 aa).

The next 5 membrane-spanning stretches (helical) occupy residues 28 to 48 (GQVL…CLLG), 95 to 115 (VPFL…GALI), 134 to 154 (INTT…AGIS), 199 to 219 (LVVG…IMLL), and 220 to 240 (GLFT…AYIG).

The protein belongs to the ATPase A chain family. F-type ATPases have 2 components, CF(1) - the catalytic core - and CF(0) - the membrane proton channel. CF(1) has five subunits: alpha(3), beta(3), gamma(1), delta(1), epsilon(1). CF(0) has four main subunits: a, b, b' and c.

The protein resides in the plastid. The protein localises to the chloroplast thylakoid membrane. Functionally, key component of the proton channel; it plays a direct role in the translocation of protons across the membrane. This Chlorella vulgaris (Green alga) protein is ATP synthase subunit a, chloroplastic.